The sequence spans 110 residues: Large ribosomal subunit protein uL22 (110 aa).

It belongs to the universal ribosomal protein uL22 family. Part of the 50S ribosomal subunit.

Its function is as follows. This protein binds specifically to 23S rRNA; its binding is stimulated by other ribosomal proteins, e.g. L4, L17, and L20. It is important during the early stages of 50S assembly. It makes multiple contacts with different domains of the 23S rRNA in the assembled 50S subunit and ribosome. The globular domain of the protein is located near the polypeptide exit tunnel on the outside of the subunit, while an extended beta-hairpin is found that lines the wall of the exit tunnel in the center of the 70S ribosome. The polypeptide is Large ribosomal subunit protein uL22 (Shewanella loihica (strain ATCC BAA-1088 / PV-4)).